The primary structure comprises 415 residues: Methylmalonic aciduria type A homolog, mitochondrial (415 aa).

The transit peptide at 1–62 directs the protein to the mitochondrion; that stretch reads MTISTLLLSP…LLSDGFRRTL (62 aa). Residues 147-155, Asp-289, and 325-327 each bind GTP; these read GPPGAGKST and SAR.

Belongs to the SIMIBI class G3E GTPase family. ArgK/MeaB subfamily. In terms of assembly, homodimer. Interacts with MMUT (the apoenzyme form); the interaction is GTP dependent.

The protein localises to the mitochondrion. It localises to the cytoplasm. The catalysed reaction is GTP + H2O = GDP + phosphate + H(+). GTPase activity is stimulated by MMUT. In terms of biological role, GTPase, binds and hydrolyzes GTP. Involved in intracellular vitamin B12 metabolism, mediates the transport of cobalamin (Cbl) into mitochondria for the final steps of adenosylcobalamin (AdoCbl) synthesis. Functions as a G-protein chaperone that assists AdoCbl cofactor delivery from MMAB to the methylmalonyl-CoA mutase (MMUT). Plays a dual role as both a protectase and a reactivase for MMUT. Protects MMUT from progressive inactivation by oxidation by decreasing the rate of the formation of the oxidized inactive cofactor hydroxocobalamin (OH2Cbl). Additionally acts a reactivase by promoting the replacement of OH2Cbl by the active cofactor AdoCbl, restoring the activity of MMUT in the presence and hydrolysis of GTP. In Mus musculus (Mouse), this protein is Methylmalonic aciduria type A homolog, mitochondrial.